A 287-amino-acid polypeptide reads, in one-letter code: Acetylglutamate kinase (287 aa).

Substrate contacts are provided by residues 70–71 (GG), arginine 92, and asparagine 184.

This sequence belongs to the acetylglutamate kinase family. ArgB subfamily.

It localises to the cytoplasm. It carries out the reaction N-acetyl-L-glutamate + ATP = N-acetyl-L-glutamyl 5-phosphate + ADP. It functions in the pathway amino-acid biosynthesis; L-arginine biosynthesis; N(2)-acetyl-L-ornithine from L-glutamate: step 2/4. In terms of biological role, catalyzes the ATP-dependent phosphorylation of N-acetyl-L-glutamate. This Dinoroseobacter shibae (strain DSM 16493 / NCIMB 14021 / DFL 12) protein is Acetylglutamate kinase.